A 451-amino-acid chain; its full sequence is uncharacterized protein (451 aa).

Residues 1 to 451 (MSETENKTTT…KKEAAKNKSK (451 aa)) are disordered. Residues 9–22 (TTETPTTTDSTVTT) are compositionally biased toward low complexity. Over residues 44-54 (VKNQLSNTRTR) the composition is skewed to polar residues. Residues 73 to 99 (KLIDTKERKEKKEKKEKEPKEPKEPKE) are compositionally biased toward basic and acidic residues. Residues 114–147 (GDEEEDEEKEEDEEQKEEQSQEEDSEESEEEQNS) show a composition bias toward acidic residues. Basic residues predominate over residues 152-162 (KKKKKQAKKVA). Composition is skewed to basic and acidic residues over residues 163 to 192 (KKET…EKEA), 199 to 210 (STEKKEKEEKPK), and 217 to 230 (KKDQ…KDGD). Residues 232–244 (STTTTATATTTTD) show a composition bias toward low complexity. Basic and acidic residues-rich tracts occupy residues 284 to 303 (TEEK…ETKK) and 311 to 340 (AAAE…DDKP). The span at 341 to 355 (AATTTTTTAAAATTT) shows a compositional bias: low complexity. The span at 356–383 (EEPKEKITKPAADKKKAPANKKAEKDQS) shows a compositional bias: basic and acidic residues. Residues 393–425 (TTTATTTTTNKDATAPTTTTNKDATAPTTTTTK) are compositionally biased toward low complexity. A compositionally biased stretch (basic and acidic residues) spans 441–451 (PKKEAAKNKSK).

This is an uncharacterized protein from Dictyostelium discoideum (Social amoeba).